The following is a 521-amino-acid chain: Cytochrome P450 monooxygenase ABA2 (521 aa).

A helical membrane pass occupies residues Ala-15–Leu-35. Asn-366 carries N-linked (GlcNAc...) asparagine glycosylation. Cys-458 contributes to the heme binding site.

This sequence belongs to the cytochrome P450 family. The cofactor is heme.

The protein resides in the membrane. The protein operates within hormone biosynthesis. Cytochrome P450 monooxygenase involved in the biosynthesis of abscisic acid (ABA), a phytohormone that acts antagonistically toward salicylic acid (SA), jasmonic acid (JA) and ethylene (ETH) signaling, to impede plant defense responses. During pathogen-host interaction, ABA plays a dual role in disease severity by increasing plant susceptibility and accelerating pathogenesis in the fungus itself. The first step of the pathway catalyzes the reaction from farnesyl diphosphate to alpha-ionylideneethane performed by the alpha-ionylideneethane synthase ABA3 via a three-step reaction mechanism involving 2 neutral intermediates, beta-farnesene and allofarnesene. The cytochrome P450 monooxygenase ABA1 might then be involved in the conversion of alpha-ionylideneethane to alpha-ionylideneacetic acid. Alpha-ionylideneacetic acid is further converted to abscisic acid in 2 steps involving the cytochrome P450 monooxygenase ABA2 and the short-chain dehydrogenase/reductase ABA4, via the intermediates 1'-deoxy-ABA or 1',4'-trans-diol-ABA, depending on the order of action of these 2 enzymes. ABA2 is responsible for the hydroxylation of carbon atom C-1' and ABA4 might be involved in the oxidation of the C-4' carbon atom. The protein is Cytochrome P450 monooxygenase ABA2 of Pyricularia oryzae (strain 70-15 / ATCC MYA-4617 / FGSC 8958) (Rice blast fungus).